The sequence spans 313 residues: Ribosomal RNA small subunit methyltransferase H (313 aa).

S-adenosyl-L-methionine contacts are provided by residues 36–38 (GGH), Asp-56, Phe-80, Asp-102, and Gln-109.

The protein belongs to the methyltransferase superfamily. RsmH family.

Its subcellular location is the cytoplasm. It carries out the reaction cytidine(1402) in 16S rRNA + S-adenosyl-L-methionine = N(4)-methylcytidine(1402) in 16S rRNA + S-adenosyl-L-homocysteine + H(+). Functionally, specifically methylates the N4 position of cytidine in position 1402 (C1402) of 16S rRNA. The chain is Ribosomal RNA small subunit methyltransferase H from Haemophilus ducreyi (strain 35000HP / ATCC 700724).